The chain runs to 212 residues: uncharacterized protein (212 aa).

S-adenosyl-L-methionine-binding residues include G53, E74, and D96.

It belongs to the methyltransferase superfamily. YrrT family.

Its function is as follows. Could be a S-adenosyl-L-methionine-dependent methyltransferase. This is an uncharacterized protein from Anoxybacillus flavithermus (strain DSM 21510 / WK1).